The following is a 441-amino-acid chain: Endothelin receptor type B (441 aa).

The signal sequence occupies residues Met-1 to Ala-26. The Extracellular portion of the chain corresponds to Glu-27 to Lys-100. Residues Glu-30–Pro-87 are disordered. The span at Pro-41–Thr-53 shows a compositional bias: low complexity. A compositionally biased stretch (polar residues) spans Ser-54–Pro-70. A helical membrane pass occupies residues Tyr-101 to Ile-125. The Cytoplasmic segment spans residues Tyr-126–Asn-136. Residues Ile-137 to Leu-162 form a helical membrane-spanning segment. Topologically, residues Ala-163–Lys-174 are extracellular. Cys-173 and Cys-254 are oxidised to a cystine. Residues Leu-175–Ile-196 traverse the membrane as a helical segment. Over Asp-197 to Thr-217 the chain is Cytoplasmic. The helical transmembrane segment at Ala-218–Ile-242 threads the bilayer. The Extracellular portion of the chain corresponds to Thr-243 to Thr-270. Residues Ala-271–Met-295 traverse the membrane as a helical segment. The Cytoplasmic segment spans residues Thr-296 to Thr-323. Ser-304 carries the phosphoserine modification. A helical transmembrane segment spans residues Val-324 to Tyr-349. Residues Asp-350 to Ser-361 are Extracellular-facing. Residues Phe-362–Val-388 traverse the membrane as a helical segment. The Cytoplasmic segment spans residues Ser-389–Ser-441. Residues Cys-402 and Cys-404 are each lipidated (S-palmitoyl cysteine). A phosphoserine mark is found at Ser-418, Ser-434, and Ser-435. Tyr-438 carries the phosphotyrosine modification. Phosphoserine occurs at positions 439, 440, and 441.

This sequence belongs to the G-protein coupled receptor 1 family. Endothelin receptor subfamily. EDNRB sub-subfamily. Post-translationally, it is not sure whether phosphorylation is on Ser-434 or Ser-435.

The protein localises to the cell membrane. In terms of biological role, non-specific receptor for endothelin 1, 2, and 3. Mediates its action by association with G proteins that activate a phosphatidylinositol-calcium second messenger system. In Bos taurus (Bovine), this protein is Endothelin receptor type B (EDNRB).